The sequence spans 66 residues: Toxin Boma6a (66 aa).

The 63-residue stretch at R2–H64 folds into the LCN-type CS-alpha/beta domain. 4 disulfides stabilise this stretch: C12–C63, C16–C36, C22–C46, and C26–C48.

The protein belongs to the long (4 C-C) scorpion toxin superfamily. Sodium channel inhibitor family. Alpha subfamily. As to expression, expressed by the venom gland.

It is found in the secreted. In terms of biological role, alpha toxins bind voltage-independently at site-3 of sodium channels (Nav) and inhibit the inactivation of the activated channels, thereby blocking neuronal transmission. The sequence is that of Toxin Boma6a from Buthus occitanus mardochei (Moroccan scorpion).